Consider the following 432-residue polypeptide: Adenylosuccinate synthetase (432 aa).

Residues 12-18 (GDEGKGK) and 40-42 (GHT) each bind GTP. Asp13 (proton acceptor) is an active-site residue. Mg(2+) contacts are provided by Asp13 and Gly40. IMP is bound by residues 13-16 (DEGK), 38-41 (NAGH), Thr129, Arg143, Gln224, Thr239, and Arg303. Catalysis depends on His41, which acts as the Proton donor. 299–305 (VTTGRRR) is a substrate binding site. GTP contacts are provided by residues Arg305, 331–333 (KLD), and 413–415 (GVG).

Belongs to the adenylosuccinate synthetase family. Homodimer. Mg(2+) is required as a cofactor.

It localises to the cytoplasm. The catalysed reaction is IMP + L-aspartate + GTP = N(6)-(1,2-dicarboxyethyl)-AMP + GDP + phosphate + 2 H(+). It functions in the pathway purine metabolism; AMP biosynthesis via de novo pathway; AMP from IMP: step 1/2. Functionally, plays an important role in the de novo pathway of purine nucleotide biosynthesis. Catalyzes the first committed step in the biosynthesis of AMP from IMP. The protein is Adenylosuccinate synthetase of Mycobacterium marinum (strain ATCC BAA-535 / M).